The sequence spans 123 residues: Fluoride-specific ion channel FluC (123 aa).

The next 4 membrane-spanning stretches (helical) occupy residues 7-27, 39-59, 68-88, and 101-121; these read MAIALGGAFGAVARFYISGLL, MVNSIASLILGYLYGLLFWGF, FFGTGFCGALSTFSTFSYETF, and LNILANVIITIALVFAGFMLA. Residues Gly-75 and Ser-78 each contribute to the Na(+) site.

This sequence belongs to the fluoride channel Fluc/FEX (TC 1.A.43) family.

It localises to the cell membrane. The enzyme catalyses fluoride(in) = fluoride(out). Na(+) is not transported, but it plays an essential structural role and its presence is essential for fluoride channel function. In terms of biological role, fluoride-specific ion channel. Important for reducing fluoride concentration in the cell, thus reducing its toxicity. In Thermococcus kodakarensis (strain ATCC BAA-918 / JCM 12380 / KOD1) (Pyrococcus kodakaraensis (strain KOD1)), this protein is Fluoride-specific ion channel FluC.